The primary structure comprises 183 residues: Bifunctional protein PyrR (183 aa).

Substrate-binding positions include 42–43, Arg87, 104–112, Arg137, and Val161; these read TR and DDVLYTGRT. Positions 100–112 match the PRPP-binding motif; the sequence is VILVDDVLYTGRT.

It belongs to the purine/pyrimidine phosphoribosyltransferase family. PyrR subfamily.

It catalyses the reaction UMP + diphosphate = 5-phospho-alpha-D-ribose 1-diphosphate + uracil. Regulates the transcription of the pyrimidine nucleotide (pyr) operon in response to exogenous pyrimidines. Functionally, also displays a weak uracil phosphoribosyltransferase activity which is not physiologically significant. In Deinococcus radiodurans (strain ATCC 13939 / DSM 20539 / JCM 16871 / CCUG 27074 / LMG 4051 / NBRC 15346 / NCIMB 9279 / VKM B-1422 / R1), this protein is Bifunctional protein PyrR.